Consider the following 330-residue polypeptide: MDYSHSDSPSTAPAGKTPVDQLRPLLIVGPTGAGKSDLSLEVARRLDQPVEIINGDSMQMYRGMDIGTAKLSRAERAEFPHHLFDCLDVDDTASVAAYRDLAGETVEQIQARGARPIIVGGSMMYLQALVDDWQFPPTDAAVRAKWMAEQDRIGVEALHEVLRSKDPDAADIIEEKDPRRIVRALEVIELTGKPFAASQPPKNVPTRWGTRIFGLKAPGNWLNPRLEARVDRMFAAGLVAEVEGLATAGLSRESTAGKAIGYAQVLSALAGECSMEQAREDTVVGTRRYARRQRSWFRRDPRIHWLDATVADPGLLAGQVIDELRETTQG.

Polar residues predominate over residues 1-11; it reads MDYSHSDSPST. The segment at 1–21 is disordered; it reads MDYSHSDSPSTAPAGKTPVDQ. 29–36 contributes to the ATP binding site; it reads GPTGAGKS. 31-36 serves as a coordination point for substrate; sequence TGAGKS. The interval 56–59 is interaction with substrate tRNA; it reads DSMQ.

This sequence belongs to the IPP transferase family. As to quaternary structure, monomer. It depends on Mg(2+) as a cofactor.

The catalysed reaction is adenosine(37) in tRNA + dimethylallyl diphosphate = N(6)-dimethylallyladenosine(37) in tRNA + diphosphate. Catalyzes the transfer of a dimethylallyl group onto the adenine at position 37 in tRNAs that read codons beginning with uridine, leading to the formation of N6-(dimethylallyl)adenosine (i(6)A). This Corynebacterium urealyticum (strain ATCC 43042 / DSM 7109) protein is tRNA dimethylallyltransferase.